Consider the following 238-residue polypeptide: ATP synthase subunit a (238 aa).

5 helical membrane-spanning segments follow: residues 18–38, 76–96, 114–134, 166–186, and 193–213; these read LTLLAVCIVTIAVIFAFVFWA, YSLLLFTIFLFVAVANNLGLF, NLAFDLALSLFITLMVHIEGV, SLAIRLFGNIFAGEVVTGLIV, and VYWWPIAFLVNMAWTAFSVFI.

This sequence belongs to the ATPase A chain family. In terms of assembly, F-type ATPases have 2 components, CF(1) - the catalytic core - and CF(0) - the membrane proton channel. CF(1) has five subunits: alpha(3), beta(3), gamma(1), delta(1), epsilon(1). CF(0) has three main subunits: a(1), b(2) and c(9-12). The alpha and beta chains form an alternating ring which encloses part of the gamma chain. CF(1) is attached to CF(0) by a central stalk formed by the gamma and epsilon chains, while a peripheral stalk is formed by the delta and b chains.

Its subcellular location is the cell membrane. Functionally, key component of the proton channel; it plays a direct role in the translocation of protons across the membrane. The chain is ATP synthase subunit a from Streptococcus pyogenes serotype M5 (strain Manfredo).